The chain runs to 515 residues: 1-pyrroline-5-carboxylate dehydrogenase (515 aa).

Active-site residues include Glu-286 and Cys-320.

This sequence belongs to the aldehyde dehydrogenase family. RocA subfamily.

It carries out the reaction L-glutamate 5-semialdehyde + NAD(+) + H2O = L-glutamate + NADH + 2 H(+). The protein operates within amino-acid degradation; L-proline degradation into L-glutamate; L-glutamate from L-proline: step 2/2. This chain is 1-pyrroline-5-carboxylate dehydrogenase, found in Bacillus mycoides (strain KBAB4) (Bacillus weihenstephanensis).